A 1938-amino-acid chain; its full sequence is Myosin-1 (1938 aa).

The Myosin N-terminal SH3-like domain occupies 33 to 82 (DAKTSVFVADPKESFVKATVQSREGGKVTAKTEAGATVTVKEDQCFPMNP). Phosphothreonine is present on residues Thr64 and Thr69. A Myosin motor domain is found at 86 to 781 (DKIEDMAMMT…LLGLLEEMRD (696 aa)). N6,N6,N6-trimethyllysine is present on Lys130. ATP is bound at residue 179–186 (GESGAGKT). Tyr389 is subject to Phosphotyrosine. A Phosphothreonine modification is found at Thr419. At Tyr424 the chain carries Phosphotyrosine. Ser625 is subject to Phosphoserine. The tract at residues 658–680 (LNKLMTNLRSTHPHFVRCIIPNE) is actin-binding. His756 bears the Pros-methylhistidine mark. Residues 760-774 (KFGHTKVFFKAGLLG) form an actin-binding region. Residues 784–813 (LAQIITRTQARCRGFLARVEYQRMVERRES) enclose the IQ domain. The stretch at 842 to 1938 (LLKSAETEKE…EVHTKIISEE (1097 aa)) forms a coiled coil. A phosphoserine mark is found at Ser1091 and Ser1095. Disordered stretches follow at residues 1124 to 1146 (EIEA…SREL) and 1152 to 1171 (RLEE…KKRE). Positions 1127-1146 (AERASRAKAEKQRSDLSREL) are enriched in basic and acidic residues. Phosphoserine is present on residues Ser1161 and Ser1236. At Thr1240 the chain carries Phosphothreonine. Residue Ser1242 is modified to Phosphoserine. A Phosphothreonine modification is found at Thr1254. Residue Ser1260 is modified to Phosphoserine. At Thr1285 the chain carries Phosphothreonine. Phosphoserine is present on residues Ser1291, Ser1302, and Ser1305. The residue at position 1463 (Tyr1463) is a Phosphotyrosine. The residue at position 1466 (Thr1466) is a Phosphothreonine. Ser1473 carries the phosphoserine modification. Tyr1491 is subject to Phosphotyrosine. Position 1494 is a phosphoserine (Ser1494). Thr1500 is modified (phosphothreonine). Ser1513 is modified (phosphoserine). Residue Thr1516 is modified to Phosphothreonine. A phosphoserine mark is found at Ser1541, Ser1553, Ser1573, Ser1713, and Ser1725. Residues Thr1729 and Thr1735 each carry the phosphothreonine modification. Ser1738 bears the Phosphoserine mark.

The protein belongs to the TRAFAC class myosin-kinesin ATPase superfamily. Myosin family. Muscle myosin is a hexameric protein that consists of 2 heavy chain subunits (MHC), 2 alkali light chain subunits (MLC) and 2 regulatory light chain subunits (MLC-2). Interacts with SLC26A5.

The protein resides in the cytoplasm. It is found in the myofibril. Its function is as follows. Required for normal hearing. It plays a role in cochlear amplification of auditory stimuli, likely through the positive regulation of prestin (SLC26A5) activity and outer hair cell (OHC) electromotility. The polypeptide is Myosin-1 (MYH1) (Equus caballus (Horse)).